Reading from the N-terminus, the 233-residue chain is MMNDKKITSFIALPDLLSMLNASSGYLSILLSIDGSLNAACILMLLAVLFDSLDGWVARKTGRIDIHGFGKNMDSLSDVISFGVAPAILIYSAAVDFRYINILVGPLIVLCGILRLSRFNVLTGGGKNFTGLPIPVAAVTISSFYLTGFYSELSAAFIMIAVSVLMISSIEYPRVDGMGASTALILIIATIISVAAVEILQAASVVAGPVAIILFIATLTYIAVPILPKRDVI.

The next 8 membrane-spanning stretches (helical) occupy residues 7 to 27 (ITSF…SGYL), 29 to 49 (ILLS…LAVL), 75 to 95 (SLSD…SAAV), 102 to 122 (ILVG…FNVL), 126 to 146 (GKNF…SFYL), 147 to 167 (TGFY…VLMI), 180 to 200 (ASTA…VEIL), and 206 to 226 (VAGP…AVPI).

The protein belongs to the CDP-alcohol phosphatidyltransferase class-I family.

Its subcellular location is the membrane. It catalyses the reaction CDP-2,3-bis-O-(geranylgeranyl)-sn-glycerol + L-serine = archaetidylserine + CMP + H(+). The enzyme catalyses CDP-2,3-bis-O-(phytanyl)-sn-glycerol + L-serine = 2,3-bis-O-phytanyl-sn-glycero-3-phospho-L-serine + CMP + H(+). The protein operates within membrane lipid metabolism; glycerophospholipid metabolism. Its activity is regulated as follows. Activated by Mn(2+) ions. Functionally, involved in the lipid biosynthesis. Catalyzes the formation of unsaturated archaetidylserine from CDP-unsaturated archaeol and L-serine. Activity with ester-linked substrate analogs containing straight aliphatic chains (typical bacterial substrates) is two to three times higher than that with the corresponding ether-type substrate (typical archaeal substrates). Both enantiomers of CDP-unsaturated archaeols with ether-linked geranylgeranyl chains and CDP-saturated archaeol with ether-linked phytanyl chains are similarly active. The enzyme also accepts D-serine, although activity is only about third of that with L-serine. This chain is Archaetidylserine synthase, found in Methanothermobacter thermautotrophicus (strain ATCC 29096 / DSM 1053 / JCM 10044 / NBRC 100330 / Delta H) (Methanobacterium thermoautotrophicum).